The primary structure comprises 502 residues: Cytochrome P450 monooxygenase pyr9 (502 aa).

Residues 5–25 (EDASIGTVWVTCLLAVGLYFI) form a helical membrane-spanning segment. N-linked (GlcNAc...) asparagine glycosylation is found at Asn-205, Asn-291, and Asn-372. Heme is bound at residue Cys-437.

Belongs to the cytochrome P450 family. Requires heme as cofactor.

It is found in the membrane. Its pathway is secondary metabolite biosynthesis; terpenoid biosynthesis. In terms of biological role, cytochrome P450 monooxygenase; part of the gene cluster that mediates the biosynthesis of pyripyropene A, a specific human acyl-coenzyme A:cholesterol acyltransferase 2 inhibitor. The first step of the pathway is the synthesis of nicotinyl-CoA from nicotinic acid by the nicotinic acid-CoA ligase pyr1. Nicotinyl-CoA is then a substrate of polyketide synthase pyr2 to produce 4-hydroxy-6-(3-pyridinyl)-2H-pyran-2-one (HPPO) which is further prenylated by the polyprenyl transferase pyr6 to yield farnesyl-HPPO. The next steps consist of an epoxidation of farnesyl-HPPO to epoxyfarnesyl-HPPO by FAD-dependent monooxygenase pyr5 and a cyclization of the terpenoid portion by the terpene cyclase pyr4 to yield deacetyl-pyripyropene E. The 2 cytochrome P450 monooxygenases pyr3 and pyr9, and the 2 acetyltransferases pyr7 and pyr8 are involved in the conversion of deacetyl-pyripyropene E into pyripyropene A through several cycles of oxidation and acetylation steps. Pyr7 acetylates deacetyl-pyripyropene E to pyripyropene E which is oxidized to 11-deacetyl-pyripyropene O by pyr3, which is in turn acetylated into pyripyropene O by pyr8. Pyripyropene O is then oxidized to deacetyl-pyripyropene A by pyr9. Deacetyl-pyripyropene A is finally acetylated to pyripyropene A by pyr8. This Aspergillus fumigatus (strain ATCC MYA-4609 / CBS 101355 / FGSC A1100 / Af293) (Neosartorya fumigata) protein is Cytochrome P450 monooxygenase pyr9.